The chain runs to 170 residues: Pollen-specific protein C13 (170 aa).

The signal sequence occupies residues 1-27; sequence MASVPAPATTTAAVILCLCVVLSCAAA. Disulfide bonds link cysteine 43-cysteine 114, cysteine 46-cysteine 155, and cysteine 67-cysteine 102. N-linked (GlcNAc...) asparagine glycosylation occurs at asparagine 53.

This sequence belongs to the Ole e I family. In terms of tissue distribution, pollen.

The polypeptide is Pollen-specific protein C13 (MGS1) (Zea mays (Maize)).